Here is a 333-residue protein sequence, read N- to C-terminus: O-acetyl transferase (333 aa).

Belongs to the acyltransferase 3 family.

It localises to the host cell inner membrane. In terms of biological role, antigenically converts S.flexneri serotype X to 3a, Y to 3b, 1a to 1b and 4a to 4b by O-acetylating the O-antigenic polysaccharide chain. This is O-acetyl transferase (OAC) from Shigella flexneri (Shigella flexneri bacteriophage VI).